Here is a 175-residue protein sequence, read N- to C-terminus: Large ribosomal subunit protein uL10 (175 aa).

The protein belongs to the universal ribosomal protein uL10 family. As to quaternary structure, part of the ribosomal stalk of the 50S ribosomal subunit. The N-terminus interacts with L11 and the large rRNA to form the base of the stalk. The C-terminus forms an elongated spine to which L12 dimers bind in a sequential fashion forming a multimeric L10(L12)X complex.

Forms part of the ribosomal stalk, playing a central role in the interaction of the ribosome with GTP-bound translation factors. This chain is Large ribosomal subunit protein uL10, found in Delftia acidovorans (strain DSM 14801 / SPH-1).